We begin with the raw amino-acid sequence, 61 residues long: Large ribosomal subunit protein bL32 (61 aa).

Over residues 1–19 (MAHPKRRQSKTRTAKRRTH) the composition is skewed to basic residues. A disordered region spans residues 1 to 20 (MAHPKRRQSKTRTAKRRTHD).

The protein belongs to the bacterial ribosomal protein bL32 family.

The protein is Large ribosomal subunit protein bL32 of Bacteroides fragilis (strain YCH46).